The following is a 59-amino-acid chain: Single-pass membrane and coiled-coil domain-containing protein 4 homolog (59 aa).

The segment covering 1-11 (MAGRNKAKPRL) has biased composition (basic residues). The disordered stretch occupies residues 1–20 (MAGRNKAKPRLSKKEKEERR). A coiled-coil region spans residues 10–30 (RLSKKEKEERRKDMAEVQEKV). Residues 30–50 (VFSVVVPVVVAFTVVIMLIVY) traverse the membrane as a helical segment.

This sequence belongs to the SMCO4 family.

The protein localises to the membrane. The protein is Single-pass membrane and coiled-coil domain-containing protein 4 homolog of Argas monolakensis (Mono lake bird tick).